The following is a 310-amino-acid chain: p-hydroxybenzoic acid efflux pump subunit AaeA (310 aa).

The helical transmembrane segment at 12-32 (AITVVLVILAFIAIFNAWVYY) threads the bilayer.

This sequence belongs to the membrane fusion protein (MFP) (TC 8.A.1) family.

The protein resides in the cell inner membrane. Forms an efflux pump with AaeB. The protein is p-hydroxybenzoic acid efflux pump subunit AaeA of Escherichia coli O9:H4 (strain HS).